Consider the following 348-residue polypeptide: Holliday junction branch migration complex subunit RuvB (348 aa).

The tract at residues 4–184 (TDRLIAASGR…FGIVQRLEFY (181 aa)) is large ATPase domain (RuvB-L). ATP contacts are provided by residues I23, R24, G65, K68, T69, T70, 131-133 (EDF), R174, Y184, and R221. Mg(2+) is bound at residue T69. Residues 185 to 255 (SNKDLATIVS…VADMALNLLD (71 aa)) form a small ATPAse domain (RuvB-S) region. Residues 258–348 (ERGFDHSDRR…GGEYAAQDDE (91 aa)) are head domain (RuvB-H). 3 residues coordinate DNA: R294, R313, and R318.

It belongs to the RuvB family. In terms of assembly, homohexamer. Forms an RuvA(8)-RuvB(12)-Holliday junction (HJ) complex. HJ DNA is sandwiched between 2 RuvA tetramers; dsDNA enters through RuvA and exits via RuvB. An RuvB hexamer assembles on each DNA strand where it exits the tetramer. Each RuvB hexamer is contacted by two RuvA subunits (via domain III) on 2 adjacent RuvB subunits; this complex drives branch migration. In the full resolvosome a probable DNA-RuvA(4)-RuvB(12)-RuvC(2) complex forms which resolves the HJ.

The protein localises to the cytoplasm. It carries out the reaction ATP + H2O = ADP + phosphate + H(+). Functionally, the RuvA-RuvB-RuvC complex processes Holliday junction (HJ) DNA during genetic recombination and DNA repair, while the RuvA-RuvB complex plays an important role in the rescue of blocked DNA replication forks via replication fork reversal (RFR). RuvA specifically binds to HJ cruciform DNA, conferring on it an open structure. The RuvB hexamer acts as an ATP-dependent pump, pulling dsDNA into and through the RuvAB complex. RuvB forms 2 homohexamers on either side of HJ DNA bound by 1 or 2 RuvA tetramers; 4 subunits per hexamer contact DNA at a time. Coordinated motions by a converter formed by DNA-disengaged RuvB subunits stimulates ATP hydrolysis and nucleotide exchange. Immobilization of the converter enables RuvB to convert the ATP-contained energy into a lever motion, pulling 2 nucleotides of DNA out of the RuvA tetramer per ATP hydrolyzed, thus driving DNA branch migration. The RuvB motors rotate together with the DNA substrate, which together with the progressing nucleotide cycle form the mechanistic basis for DNA recombination by continuous HJ branch migration. Branch migration allows RuvC to scan DNA until it finds its consensus sequence, where it cleaves and resolves cruciform DNA. The polypeptide is Holliday junction branch migration complex subunit RuvB (Pseudomonas entomophila (strain L48)).